A 305-amino-acid chain; its full sequence is Acetaldehyde dehydrogenase 5 (305 aa).

Position 11 to 14 (11 to 14) interacts with NAD(+); the sequence is SGNI. Residue C130 is the Acyl-thioester intermediate of the active site. NAD(+)-binding positions include 161–169 and N272; that span reads SIGPGTRAN.

This sequence belongs to the acetaldehyde dehydrogenase family.

It carries out the reaction acetaldehyde + NAD(+) + CoA = acetyl-CoA + NADH + H(+). The sequence is that of Acetaldehyde dehydrogenase 5 from Dechloromonas aromatica (strain RCB).